The chain runs to 239 residues: tRNA (guanine-N(1)-)-methyltransferase (239 aa).

Residues G108 and 128 to 133 each bind S-adenosyl-L-methionine; that span reads VGNFIV.

The protein belongs to the RNA methyltransferase TrmD family. In terms of assembly, homodimer.

It localises to the cytoplasm. The enzyme catalyses guanosine(37) in tRNA + S-adenosyl-L-methionine = N(1)-methylguanosine(37) in tRNA + S-adenosyl-L-homocysteine + H(+). Its function is as follows. Specifically methylates guanosine-37 in various tRNAs. The polypeptide is tRNA (guanine-N(1)-)-methyltransferase (Helicobacter hepaticus (strain ATCC 51449 / 3B1)).